The following is a 240-amino-acid chain: Uridylate kinase (240 aa).

Residue 13–16 (KISG) coordinates ATP. G55 contacts UMP. ATP-binding residues include G56 and R60. UMP contacts are provided by residues D75 and 136–143 (TGNPFFTT). ATP contacts are provided by T163, Q164, Y169, and D172.

The protein belongs to the UMP kinase family. In terms of assembly, homohexamer.

The protein resides in the cytoplasm. It catalyses the reaction UMP + ATP = UDP + ADP. The protein operates within pyrimidine metabolism; CTP biosynthesis via de novo pathway; UDP from UMP (UMPK route): step 1/1. Its activity is regulated as follows. Inhibited by UTP. Catalyzes the reversible phosphorylation of UMP to UDP. This chain is Uridylate kinase, found in Paramagnetospirillum magneticum (strain ATCC 700264 / AMB-1) (Magnetospirillum magneticum).